The sequence spans 298 residues: Foldase protein PrsA 1 (298 aa).

Positions 1 to 19 are cleaved as a signal peptide; that stretch reads MKKWLIALAGVLLTFTLAG. Cysteine 20 carries the N-palmitoyl cysteine lipid modification. The S-diacylglycerol cysteine moiety is linked to residue cysteine 20. Residues 136–232 enclose the PpiC domain; the sequence is EPKVTVQHIL…NGYEIIRMIK (97 aa).

This sequence belongs to the PrsA family.

It localises to the cell membrane. The enzyme catalyses [protein]-peptidylproline (omega=180) = [protein]-peptidylproline (omega=0). In terms of biological role, plays a major role in protein secretion by helping the post-translocational extracellular folding of several secreted proteins. The sequence is that of Foldase protein PrsA 1 (prsA1) from Lactiplantibacillus plantarum (strain ATCC BAA-793 / NCIMB 8826 / WCFS1) (Lactobacillus plantarum).